A 109-amino-acid chain; its full sequence is MKHFAKVSSKNIWVIHLAKVKYNIDNDSSFFSVQCNSSNNLNNNNFNENNLKNNNNRNGNNNNNNNNNNNNNNNNNNNNNNNNNNNNNKKNDLTDTINQKKKKKKRRVK.

The disordered stretch occupies residues 36-109; it reads NSSNNLNNNN…KKKKKKRRVK (74 aa). Residues 39 to 88 show a composition bias toward low complexity; the sequence is NNLNNNNFNENNLKNNNNRNGNNNNNNNNNNNNNNNNNNNNNNNNNNNNN. Residues 99–109 are compositionally biased toward basic residues; it reads QKKKKKKRRVK.

This is an uncharacterized protein from Dictyostelium discoideum (Social amoeba).